A 465-amino-acid chain; its full sequence is Cysteine--tRNA ligase (465 aa).

Cys-27 contributes to the Zn(2+) binding site. The short motif at 29 to 39 is the 'HIGH' region element; it reads PTVYDDAHLGH. Zn(2+)-binding residues include Cys-207, His-237, and Glu-241. The 'KMSKS' region signature appears at 269 to 273; that stretch reads KMSKS. Lys-272 is an ATP binding site.

This sequence belongs to the class-I aminoacyl-tRNA synthetase family. In terms of assembly, monomer. Zn(2+) serves as cofactor.

The protein resides in the cytoplasm. The catalysed reaction is tRNA(Cys) + L-cysteine + ATP = L-cysteinyl-tRNA(Cys) + AMP + diphosphate. This Helicobacter acinonychis (strain Sheeba) protein is Cysteine--tRNA ligase.